An 876-amino-acid polypeptide reads, in one-letter code: Alanine--tRNA ligase (876 aa).

Residues H564, H568, C666, and H670 each coordinate Zn(2+).

It belongs to the class-II aminoacyl-tRNA synthetase family. As to quaternary structure, homotetramer. Requires Zn(2+) as cofactor.

It is found in the cytoplasm. It carries out the reaction tRNA(Ala) + L-alanine + ATP = L-alanyl-tRNA(Ala) + AMP + diphosphate. In terms of biological role, catalyzes the attachment of alanine to tRNA(Ala) in a two-step reaction: alanine is first activated by ATP to form Ala-AMP and then transferred to the acceptor end of tRNA(Ala). Also edits incorrectly charged Ser-tRNA(Ala) and Gly-tRNA(Ala) via its editing domain. This chain is Alanine--tRNA ligase, found in Salmonella typhimurium (strain LT2 / SGSC1412 / ATCC 700720).